The following is a 505-amino-acid chain: Deoxyguanosinetriphosphate triphosphohydrolase (505 aa).

Residues 66-273 form the HD domain; sequence RLTHSMEVQQ…MEAADDISYC (208 aa).

This sequence belongs to the dGTPase family. Type 1 subfamily. Homotetramer. Requires Mg(2+) as cofactor.

It carries out the reaction dGTP + H2O = 2'-deoxyguanosine + triphosphate + H(+). Its function is as follows. dGTPase preferentially hydrolyzes dGTP over the other canonical NTPs. This is Deoxyguanosinetriphosphate triphosphohydrolase from Escherichia coli O7:K1 (strain IAI39 / ExPEC).